Consider the following 760-residue polypeptide: Xaa-Pro dipeptidyl-peptidase (760 aa).

Active-site charge relay system residues include Ser349, Asp469, and His499.

The protein belongs to the peptidase S15 family. Homodimer.

The protein localises to the cytoplasm. The enzyme catalyses Hydrolyzes Xaa-Pro-|- bonds to release unblocked, N-terminal dipeptides from substrates including Ala-Pro-|-p-nitroanilide and (sequentially) Tyr-Pro-|-Phe-Pro-|-Gly-Pro-|-Ile.. Functionally, removes N-terminal dipeptides sequentially from polypeptides having unsubstituted N-termini provided that the penultimate residue is proline. This is Xaa-Pro dipeptidyl-peptidase from Streptococcus pyogenes serotype M6 (strain ATCC BAA-946 / MGAS10394).